A 301-amino-acid chain; its full sequence is Inactive C-alpha-formylglycine-generating enzyme 2 (301 aa).

Residues 1 to 25 (MGISLSPLLTVLSLLSGRWLELGNG) form the signal peptide. C156 and C290 are disulfide-bonded. N191 carries an N-linked (GlcNAc...) asparagine glycan. N194, L195, D208, F210, D229, G232, V234, and E236 together coordinate Ca(2+). The span at 274–284 (RMGNTPDSASD) shows a compositional bias: polar residues. Residues 274-301 (RMGNTPDSASDNLGFRCASGAGRPPGEL) form a disordered region. Residues 298-301 (PGEL) carry the Non-canonical ER retention motif motif.

The protein belongs to the sulfatase-modifying factor family. Homodimer and heterodimer with SUMF1.

It is found in the endoplasmic reticulum lumen. In terms of biological role, lacks formylglycine generating activity and is unable to convert newly synthesized inactive sulfatases to their active form. Inhibits the activation of sulfatases by SUMF1. This Bos taurus (Bovine) protein is Inactive C-alpha-formylglycine-generating enzyme 2.